The chain runs to 130 residues: Small ribosomal subunit protein uS11 (130 aa).

This sequence belongs to the universal ribosomal protein uS11 family. As to quaternary structure, part of the 30S ribosomal subunit. Interacts with proteins S7 and S18. Binds to IF-3.

Located on the platform of the 30S subunit, it bridges several disparate RNA helices of the 16S rRNA. Forms part of the Shine-Dalgarno cleft in the 70S ribosome. This chain is Small ribosomal subunit protein uS11, found in Prochlorococcus marinus (strain MIT 9211).